The chain runs to 476 residues: Lipase (476 aa).

Positions M1–A23 are cleaved as a signal peptide. Residue S207 is the Charge relay system of the active site. 3 Hemolysin-type calcium-binding repeats span residues I372–I389, E390–F407, and S410–L427. Positions 437, 440, and 448 each coordinate Ca(2+).

The protein belongs to the AB hydrolase superfamily. Lipase family.

It catalyses the reaction a triacylglycerol + H2O = a diacylglycerol + a fatty acid + H(+). This is Lipase from Pseudomonas fluorescens.